The following is a 301-amino-acid chain: Acetylglutamate kinase (301 aa).

Residues 68–69 (GG), Arg90, and Asn197 each bind substrate.

It belongs to the acetylglutamate kinase family. ArgB subfamily.

Its subcellular location is the cytoplasm. The enzyme catalyses N-acetyl-L-glutamate + ATP = N-acetyl-L-glutamyl 5-phosphate + ADP. Its pathway is amino-acid biosynthesis; L-arginine biosynthesis; N(2)-acetyl-L-ornithine from L-glutamate: step 2/4. Functionally, catalyzes the ATP-dependent phosphorylation of N-acetyl-L-glutamate. This chain is Acetylglutamate kinase, found in Nitrosococcus oceani (strain ATCC 19707 / BCRC 17464 / JCM 30415 / NCIMB 11848 / C-107).